A 359-amino-acid chain; its full sequence is Chorismate synthase (359 aa).

Residues R48 and R54 each coordinate NADP(+). Residues 125–127, 243–244, G283, 298–302, and R324 each bind FMN; these read RSS, NA, and KPTSS.

Belongs to the chorismate synthase family. Homotetramer. It depends on FMNH2 as a cofactor.

It catalyses the reaction 5-O-(1-carboxyvinyl)-3-phosphoshikimate = chorismate + phosphate. The protein operates within metabolic intermediate biosynthesis; chorismate biosynthesis; chorismate from D-erythrose 4-phosphate and phosphoenolpyruvate: step 7/7. Catalyzes the anti-1,4-elimination of the C-3 phosphate and the C-6 proR hydrogen from 5-enolpyruvylshikimate-3-phosphate (EPSP) to yield chorismate, which is the branch point compound that serves as the starting substrate for the three terminal pathways of aromatic amino acid biosynthesis. This reaction introduces a second double bond into the aromatic ring system. The chain is Chorismate synthase from Mannheimia succiniciproducens (strain KCTC 0769BP / MBEL55E).